The sequence spans 198 residues: Superoxide dismutase [Mn], mitochondrial (198 aa).

Residue His26 participates in Mn(2+) binding. Residue Tyr34 is modified to 3'-nitrotyrosine. Residues Lys44 and Lys51 each carry the N6-acetyllysine; alternate modification. 2 positions are modified to N6-succinyllysine; alternate: Lys44 and Lys51. A Mn(2+)-binding site is contributed by His74. Lys90 bears the N6-acetyllysine mark. N6-acetyllysine; alternate occurs at positions 98 and 106. N6-succinyllysine; alternate is present on residues Lys98 and Lys106. Asp159 and His163 together coordinate Mn(2+). Lys178 is modified (N6-acetyllysine).

It belongs to the iron/manganese superoxide dismutase family. In terms of assembly, homotetramer. The cofactor is Mn(2+). Post-translationally, nitrated under oxidative stress. Nitration coupled with oxidation inhibits the catalytic activity. In terms of processing, acetylation at Lys-98 decreases enzymatic activity. Deacetylated by SIRT3 upon exposure to ionizing radiations or after long fasting. Polyubiquitinated; leading to proteasomal degradation. Deubiquitinated by USP36 which increases protein stability.

Its subcellular location is the mitochondrion matrix. The catalysed reaction is 2 superoxide + 2 H(+) = H2O2 + O2. Its function is as follows. Destroys superoxide anion radicals which are normally produced within the cells and which are toxic to biological systems. This is Superoxide dismutase [Mn], mitochondrial (SOD2) from Callithrix jacchus (White-tufted-ear marmoset).